Reading from the N-terminus, the 361-residue chain is tRNA-specific 2-thiouridylase MnmA (361 aa).

Residues glycine 11–serine 18 and methionine 37 contribute to the ATP site. Residues asparagine 97 to aspartate 99 form an interaction with target base in tRNA region. The active-site Nucleophile is cysteine 102. Cysteine 102 and cysteine 199 are disulfide-bonded. Glycine 126 provides a ligand contact to ATP. The tract at residues lysine 149–glutamine 151 is interaction with tRNA. The Cysteine persulfide intermediate role is filled by cysteine 199. The interaction with tRNA stretch occupies residues arginine 311 to tyrosine 312.

It belongs to the MnmA/TRMU family.

The protein resides in the cytoplasm. The catalysed reaction is S-sulfanyl-L-cysteinyl-[protein] + uridine(34) in tRNA + AH2 + ATP = 2-thiouridine(34) in tRNA + L-cysteinyl-[protein] + A + AMP + diphosphate + H(+). In terms of biological role, catalyzes the 2-thiolation of uridine at the wobble position (U34) of tRNA, leading to the formation of s(2)U34. This is tRNA-specific 2-thiouridylase MnmA from Cupriavidus taiwanensis (strain DSM 17343 / BCRC 17206 / CCUG 44338 / CIP 107171 / LMG 19424 / R1) (Ralstonia taiwanensis (strain LMG 19424)).